The primary structure comprises 1042 residues: Ubiquitin carboxyl-terminal hydrolase 38 (1042 aa).

One can recognise a USP domain in the interval 445–949 (TGLINLGNTC…TAYVLLYKKQ (505 aa)). The active-site Nucleophile is C454. The active-site Proton acceptor is H857.

Belongs to the peptidase C19 family. In terms of assembly, interacts with isoform 1 of FBXW7; this interaction prevents FBXW7-mediated degradation of MYC. In terms of tissue distribution, highly expressed in skeletal muscle. Expressed in adrenal gland.

It is found in the cytoplasm. It localises to the nucleus. The enzyme catalyses Thiol-dependent hydrolysis of ester, thioester, amide, peptide and isopeptide bonds formed by the C-terminal Gly of ubiquitin (a 76-residue protein attached to proteins as an intracellular targeting signal).. Its function is as follows. Deubiquitinating enzyme that plays a role in various cellular processes, including DNA repair, cell cycle regulation, and immune response. Plays a role in the inhibition of type I interferon signaling by mediating the 'Lys-33' to 'Lys-48' ubiquitination transition of TBK1 leading to its degradation. Cleaves the ubiquitin chain from the histone demethylase LSD1/KDM1A and prevents it from degradation by the 26S proteasome, thus maintaining LSD1 protein level in cells. Plays a role in the DNA damage response by regulating the deacetylase activity of HDAC1. Mechanistically, removes the 'Lys-63'-linked ubiquitin chain promoting the deacetylase activity of HDAC1 in response to DNA damage. Also acts as a specific deubiquitinase of histone deacetylase 3/HDAC3 and cleaves its 'Lys-63'-linked ubiquitin chains to lower its histone deacetylase activity. Regulates MYC levels and cell proliferation via antagonizing ubiquitin E3 ligase FBXW7 thereby preventing MYC 'Lys-48'-linked ubiquitination and degradation. Participates in antiviral response by removing both 'Lys-48'-linked and 'Lys-63'-linked polyubiquitination of Zika virus envelope protein E. Constitutively associated with IL-33R/IL1RL1, deconjugates its 'Lys-27'-linked polyubiquitination resulting in its autophagic degradation. This Homo sapiens (Human) protein is Ubiquitin carboxyl-terminal hydrolase 38 (USP38).